The primary structure comprises 715 residues: Coiled-coil domain-containing protein 170 (715 aa).

Coiled-coil stretches lie at residues 30-286, 360-418, and 478-656; these read VTRE…AGQQ, ESRD…LVSG, and ENKT…FREV. A required for binding to microtubules and Golgi apparatus location region spans residues 355-591; the sequence is MDSREESRDR…DLNKSRDQLE (237 aa).

Binds Golgi-associated microtubules.

The protein localises to the golgi apparatus. In terms of biological role, plays a role in Golgi-associated microtubules organization and stabilization. The sequence is that of Coiled-coil domain-containing protein 170 from Homo sapiens (Human).